A 582-amino-acid chain; its full sequence is GDP-Man:Man(3)GlcNAc(2)-PP-Dol alpha-1,2-mannosyltransferase (582 aa).

At 1-12 the chain is on the lumenal side; sequence MESCWLTMESYQ. Residues 13–33 form a helical membrane-spanning segment; that stretch reads AALVVCIVSGLILAVAGYGNV. The Cytoplasmic portion of the chain corresponds to 34–240; it reads RRLACEFLLK…CCPPDVWCDT (207 aa). The helical intramembrane region spans 241–261; that stretch reads MGYPFGYPFVSWLCRIPIITY. Residues 262-461 are Cytoplasmic-facing; it reads THYPVVSIDM…EHFGIAVVEY (200 aa). The helical intramembrane region spans 462-482; sequence AASGLITLAHASAGPLLDIIV. Topologically, residues 483 to 582 are cytoplasmic; sequence PWDIEGDKQL…LHTLRNDKVE (100 aa).

The protein belongs to the glycosyltransferase group 1 family.

The protein localises to the endoplasmic reticulum membrane. The catalysed reaction is an alpha-D-Man-(1-&gt;3)-[alpha-D-Man-(1-&gt;6)]-beta-D-Man-(1-&gt;4)-beta-D-GlcNAc-(1-&gt;4)-alpha-D-GlcNAc-diphospho-di-trans,poly-cis-dolichol + 2 GDP-alpha-D-mannose = an alpha-D-Man-(1-&gt;2)-alpha-D-Man-(1-&gt;2)-alpha-D-Man-(1-&gt;3)-[alpha-D-Man-(1-&gt;6)]-beta-D-Man-(1-&gt;4)-beta-D-GlcNAc-(1-&gt;4)-alpha-D-GlcNAc-diphospho-di-trans,poly-cis-dolichol + 2 GDP + 2 H(+). It participates in protein modification; protein glycosylation. Its function is as follows. GDP-Man:Man(3)GlcNAc(2)-PP-Dol alpha-1,2-mannosyltransferase that operates in the biosynthetic pathway of dolichol-linked oligosaccharides, the glycan precursors employed in protein asparagine (N)-glycosylation. The assembly of dolichol-linked oligosaccharides begins on the cytosolic side of the endoplasmic reticulum membrane and finishes in its lumen. The sequential addition of sugars to dolichol pyrophosphate produces dolichol-linked oligosaccharides containing fourteen sugars, including two GlcNAcs, nine mannoses and three glucoses. Once assembled, the oligosaccharide is transferred from the lipid to nascent proteins by oligosaccharyltransferases. Catalyzes, on the cytoplasmic face of the endoplasmic reticulum, the addition of the fourth and fifth mannose residues to the dolichol-linked oligosaccharide chain, to produce Man(5)GlcNAc(2)-PP-dolichol core oligosaccharide. The sequence is that of GDP-Man:Man(3)GlcNAc(2)-PP-Dol alpha-1,2-mannosyltransferase (ALG11) from Eremothecium gossypii (strain ATCC 10895 / CBS 109.51 / FGSC 9923 / NRRL Y-1056) (Yeast).